The chain runs to 189 residues: Ribonuclease HII (189 aa).

Residues 1–189 enclose the RNase H type-2 domain; that stretch reads MIAGVDEAGR…IAALLKNNKK (189 aa). The a divalent metal cation site is built by Asp-6, Glu-7, and Asp-98.

Belongs to the RNase HII family. Mn(2+) is required as a cofactor. The cofactor is Mg(2+).

The protein localises to the cytoplasm. The catalysed reaction is Endonucleolytic cleavage to 5'-phosphomonoester.. Endonuclease that specifically degrades the RNA of RNA-DNA hybrids. This chain is Ribonuclease HII, found in Dichelobacter nodosus (strain VCS1703A).